The primary structure comprises 944 residues: Valine--tRNA ligase (944 aa).

Residues 43-53 (PNVTGTLHMGH) carry the 'HIGH' region motif. Residues 550–554 (KMSKS) carry the 'KMSKS' region motif. Lys553 contacts ATP. A coiled-coil region spans residues 878–942 (LVDMDAERTR…QLTGLREQRA (65 aa)).

The protein belongs to the class-I aminoacyl-tRNA synthetase family. ValS type 1 subfamily. As to quaternary structure, monomer.

It localises to the cytoplasm. It catalyses the reaction tRNA(Val) + L-valine + ATP = L-valyl-tRNA(Val) + AMP + diphosphate. Functionally, catalyzes the attachment of valine to tRNA(Val). As ValRS can inadvertently accommodate and process structurally similar amino acids such as threonine, to avoid such errors, it has a 'posttransfer' editing activity that hydrolyzes mischarged Thr-tRNA(Val) in a tRNA-dependent manner. The protein is Valine--tRNA ligase of Xanthomonas axonopodis pv. citri (strain 306).